A 202-amino-acid chain; its full sequence is Small ribosomal subunit protein uS4 (202 aa).

Positions 23–42 (RKAARRSYPPGQHGQARRKR) are disordered. Residues 90–154 (MRLDNLVFRL…SRKLVTANLE (65 aa)) enclose the S4 RNA-binding domain.

Belongs to the universal ribosomal protein uS4 family. As to quaternary structure, part of the 30S ribosomal subunit. Contacts protein S5. The interaction surface between S4 and S5 is involved in control of translational fidelity.

Its function is as follows. One of the primary rRNA binding proteins, it binds directly to 16S rRNA where it nucleates assembly of the body of the 30S subunit. With S5 and S12 plays an important role in translational accuracy. The protein is Small ribosomal subunit protein uS4 of Synechococcus elongatus (strain ATCC 33912 / PCC 7942 / FACHB-805) (Anacystis nidulans R2).